An 84-amino-acid polypeptide reads, in one-letter code: Large ribosomal subunit protein bL27 (84 aa).

This sequence belongs to the bacterial ribosomal protein bL27 family.

The sequence is that of Large ribosomal subunit protein bL27 from Karelsulcia muelleri (strain GWSS) (Sulcia muelleri).